Consider the following 397-residue polypeptide: Succinate--CoA ligase [ADP-forming] subunit beta (397 aa).

One can recognise an ATP-grasp domain in the interval 9–254 (KALLKSFGAP…ETEQDAKELE (246 aa)). Residues K46, 53-55 (GRG), E109, A112, and E117 each bind ATP. Residues N209 and D223 each coordinate Mg(2+). Residues N274 and 331–333 (GIM) each bind substrate.

The protein belongs to the succinate/malate CoA ligase beta subunit family. Heterotetramer of two alpha and two beta subunits. Mg(2+) serves as cofactor.

It catalyses the reaction succinate + ATP + CoA = succinyl-CoA + ADP + phosphate. The enzyme catalyses GTP + succinate + CoA = succinyl-CoA + GDP + phosphate. It functions in the pathway carbohydrate metabolism; tricarboxylic acid cycle; succinate from succinyl-CoA (ligase route): step 1/1. In terms of biological role, succinyl-CoA synthetase functions in the citric acid cycle (TCA), coupling the hydrolysis of succinyl-CoA to the synthesis of either ATP or GTP and thus represents the only step of substrate-level phosphorylation in the TCA. The beta subunit provides nucleotide specificity of the enzyme and binds the substrate succinate, while the binding sites for coenzyme A and phosphate are found in the alpha subunit. The protein is Succinate--CoA ligase [ADP-forming] subunit beta of Hyphomonas neptunium (strain ATCC 15444).